The primary structure comprises 420 residues: MTTFGTIEQAMAEIVAGRPVVVVDDANRENEGDLIFAAELATPELVAFMVRYTSGYICAPLTEDECDRLDLPPMHHTNQDRRGTAYTVTVDAREGVSTGISAADRAHTIRLLADPRTGPADLARPGHVVPLRARQGGVLRRPGHTEAAIDLTRLAGLRPAGVLCELVNDDGTMMRVPDLERFCAEHSLVLITIADLVAYRRRTEKQVELVAEARMPTRHGVFRAFGYRSDYDSAEHVALVMGDLGDGRDVLVRVHSECLTGDVLGSLRCDCGPQLNAALDQVAREGRGVVLYVRGHEGRGIGLLHKLQAYQLQDTGRDTVDANLDLGLPADARDYGTGAQILYDLGVRSMRLLTNNPAKRAGLEGYGLTVAGRVELPVRPHPENVRYLRTKRDRMGHLLEFDEVIEAPMGRAVVGDGIGA.

The segment at 1–202 (MTTFGTIEQA…IADLVAYRRR (202 aa)) is DHBP synthase. Residues 28–29 (RE), Asp33, 141–145 (RPGHT), and Glu165 contribute to the D-ribulose 5-phosphate site. Glu29 contributes to the Mg(2+) binding site. A Mg(2+)-binding site is contributed by His144. Positions 203–420 (TEKQVELVAE…RAVVGDGIGA (218 aa)) are GTP cyclohydrolase II. 253-257 (RVHSE) is a GTP binding site. Zn(2+) is bound by residues Cys258, Cys269, and Cys271. Residues Gln274, 297-299 (EGR), and Thr319 each bind GTP. The active-site Proton acceptor; for GTP cyclohydrolase activity is Asp331. Arg333 functions as the Nucleophile; for GTP cyclohydrolase activity in the catalytic mechanism. Thr354 and Lys359 together coordinate GTP.

The protein in the N-terminal section; belongs to the DHBP synthase family. In the C-terminal section; belongs to the GTP cyclohydrolase II family. Mg(2+) serves as cofactor. It depends on Mn(2+) as a cofactor. Requires Zn(2+) as cofactor.

The catalysed reaction is D-ribulose 5-phosphate = (2S)-2-hydroxy-3-oxobutyl phosphate + formate + H(+). It carries out the reaction GTP + 4 H2O = 2,5-diamino-6-hydroxy-4-(5-phosphoribosylamino)-pyrimidine + formate + 2 phosphate + 3 H(+). The protein operates within cofactor biosynthesis; riboflavin biosynthesis; 2-hydroxy-3-oxobutyl phosphate from D-ribulose 5-phosphate: step 1/1. Its pathway is cofactor biosynthesis; riboflavin biosynthesis; 5-amino-6-(D-ribitylamino)uracil from GTP: step 1/4. Functionally, catalyzes the conversion of D-ribulose 5-phosphate to formate and 3,4-dihydroxy-2-butanone 4-phosphate. In terms of biological role, catalyzes the conversion of GTP to 2,5-diamino-6-ribosylamino-4(3H)-pyrimidinone 5'-phosphate (DARP), formate and pyrophosphate. In Salinispora arenicola (strain CNS-205), this protein is Riboflavin biosynthesis protein RibBA.